The primary structure comprises 347 residues: N-acetyl-gamma-glutamyl-phosphate reductase (347 aa).

The active site involves cysteine 151.

The protein belongs to the NAGSA dehydrogenase family. Type 1 subfamily.

Its subcellular location is the cytoplasm. The enzyme catalyses N-acetyl-L-glutamate 5-semialdehyde + phosphate + NADP(+) = N-acetyl-L-glutamyl 5-phosphate + NADPH + H(+). Its pathway is amino-acid biosynthesis; L-arginine biosynthesis; N(2)-acetyl-L-ornithine from L-glutamate: step 3/4. In terms of biological role, catalyzes the NADPH-dependent reduction of N-acetyl-5-glutamyl phosphate to yield N-acetyl-L-glutamate 5-semialdehyde. This Corynebacterium diphtheriae (strain ATCC 700971 / NCTC 13129 / Biotype gravis) protein is N-acetyl-gamma-glutamyl-phosphate reductase.